The sequence spans 78 residues: Large ribosomal subunit protein bL28 (78 aa).

The interval 1–23 is disordered; it reads MSRKCQITGKKANNAMAVSHSHR.

It belongs to the bacterial ribosomal protein bL28 family.

This Picosynechococcus sp. (strain ATCC 27264 / PCC 7002 / PR-6) (Agmenellum quadruplicatum) protein is Large ribosomal subunit protein bL28.